We begin with the raw amino-acid sequence, 441 residues long: Ribosomal protein uS12 methylthiotransferase RimO (441 aa).

The MTTase N-terminal domain occupies 8–118; the sequence is PKIGFVSLGC…VLQHVHHYVP (111 aa). Positions 17, 53, 82, 150, 154, and 157 each coordinate [4Fe-4S] cluster. Residues 136 to 373 form the Radical SAM core domain; that stretch reads LTPRHYAYLK…MQLQQQISAE (238 aa). The TRAM domain maps to 376-441; that stretch reads QEKVGREILV…DEYDLWGSRV (66 aa).

It belongs to the methylthiotransferase family. RimO subfamily. The cofactor is [4Fe-4S] cluster.

The protein localises to the cytoplasm. The enzyme catalyses L-aspartate(89)-[ribosomal protein uS12]-hydrogen + (sulfur carrier)-SH + AH2 + 2 S-adenosyl-L-methionine = 3-methylsulfanyl-L-aspartate(89)-[ribosomal protein uS12]-hydrogen + (sulfur carrier)-H + 5'-deoxyadenosine + L-methionine + A + S-adenosyl-L-homocysteine + 2 H(+). Its function is as follows. Catalyzes the methylthiolation of an aspartic acid residue of ribosomal protein uS12. The sequence is that of Ribosomal protein uS12 methylthiotransferase RimO from Salmonella paratyphi A (strain ATCC 9150 / SARB42).